Here is a 506-residue protein sequence, read N- to C-terminus: MEEYQVYLELDISRQQHFLYPLIFREYIYGLAYGHDFNGSIFSENVDYDNKSSLLIVKRLITRMYQQNHLIISANDSKKNQFWGYNKNLYSQIISEGFAIVVEIPLSLQLNSSSEEAEIIKYYKNLRSIHSIFPFFEDKLTYLNYVSDARIPYPIHLEILVQVFRYWAKDAPLFHLLRLFLYEYCNWNNLITPKKLISTFSKSNLRVFLFLYNFYVCEYESIFLFLRNKSSHLQLTSFSVLFERIYFYGKIEHFVEVFAKDFSSTLSFFKEPFIHYVRYQGKSILASKNASLLMNKWKNYLIHLWQYHFDVWSQPRTIQINQFSERSFHLLGYFSNVRLNLSAVRSQMLENAFLIEIVMKKLETIVPIIPLIRSLAKAKFCNVLGHPISKPVWADSSDFDIIDRFLRICRNLSHYYNGSSKKKSLYRVKYILRLSCIKTLARKHKSTVRAFLKRLGSEKLLEEFFTEEEEILSLVFQRASSTLQGLYRGRIWYLDIIFINDLINHE.

The protein belongs to the intron maturase 2 family. MatK subfamily.

It is found in the plastid. The protein resides in the chloroplast. Usually encoded in the trnK tRNA gene intron. Probably assists in splicing its own and other chloroplast group II introns. The protein is Maturase K of Cytisus scoparius (Scotch broom).